The sequence spans 731 residues: Actin filament-associated protein 1 (731 aa).

N-acetylmethionine is present on M1. Positions 56 to 90 (NNLPAPPQMPLPEIPQPWLPPDSGPPPLPTSSLPE) are disordered. A compositionally biased stretch (pro residues) spans 59-84 (PAPPQMPLPEIPQPWLPPDSGPPPLP). The short motif at 70–73 (PQPW) is the SH3-binding element. An SH2-binding 1 motif is present at residues 93–96 (YEEA). The interval 118 to 139 (SSSYESYDEEEEDGKGKKTRHQ) is disordered. The PH 1 domain maps to 152 to 248 (DAKICAFLLR…WLKVIKEAYS (97 aa)). Residues 252–318 (GPVDPECSPP…SKSEAKGTVS (67 aa)) are disordered. Residues 271–284 (AELEKKLSSERPSS) show a composition bias toward basic and acidic residues. Residues S283 and S284 each carry the phosphoserine modification. The region spanning 348–442 (DVPTCGYLNV…WIGILLAETG (95 aa)) is the PH 2 domain. Positions 452 to 457 (YDYIDV) match the SH2-binding 2 motif. The disordered stretch occupies residues 513–544 (KNKKPPASSNGVPVKGKAPSSQQKKVETAGGV). At S549 the chain carries Phosphoserine. A coiled-coil region spans residues 558–649 (KNRVEADAKR…VKESLKKALA (92 aa)). The interval 595 to 638 (DLRAAIEVNAGRKTQAALEDKLKRLEEECKQREAERVSLELELT) is interaction with F-actin. Positions 658–731 (IEPRSGTSSP…AKEWELKNGT (74 aa)) are disordered. 3 positions are modified to phosphoserine: S665, S666, and S669. Position 676 is a phosphothreonine (T676). Residues 678-687 (ENSPISSCDT) show a composition bias toward polar residues. Residues S680 and S688 each carry the phosphoserine modification. Residues 721-731 (KAKEWELKNGT) show a composition bias toward basic and acidic residues.

As to quaternary structure, monomer and homomultimer. Interacts via its C-terminus with F-actin; probably involving AFAP1 multimers. Interacts with activated SRC SH3-SH2 domains. Interacts via its PH 1 domain with PRKCA, PRKCB and PRKCI. In terms of processing, phosphorylated on tyrosine residues by SRC.

The protein resides in the cytoplasm. It is found in the cytoskeleton. The protein localises to the stress fiber. Functionally, can cross-link actin filaments into both network and bundle structures. May modulate changes in actin filament integrity and induce lamellipodia formation. May function as an adapter molecule that links other proteins, such as SRC and PKC to the actin cytoskeleton. The protein is Actin filament-associated protein 1 (Afap1) of Mus musculus (Mouse).